Here is a 432-residue protein sequence, read N- to C-terminus: Repulsive guidance molecule A (432 aa).

Positions 1-29 are cleaved as a signal peptide; that stretch reads MGRGAGSTALGLFQILPVFLCIFPPVTSP. Residues 30–149 constitute a propeptide, removed in mature form; it reads CKILKCNSEF…NYTHCGLFGD (120 aa). Residue Asn96 is glycosylated (N-linked (GlcNAc...) asparagine). Positions 99–122 are disordered; sequence KDGPTSQPRLRTLPPGDSQERSDS. 2 cysteine pairs are disulfide-bonded: Cys126/Cys207 and Cys144/Cys296. Residue Asn140 is glycosylated (N-linked (GlcNAc...) asparagine). Asn404 is lipidated: GPI-anchor amidated asparagine. Positions 405-432 are cleaved as a propeptide — removed in mature form; that stretch reads AAPSEHPWALPALWVALLSLSQCWLGLL.

It belongs to the repulsive guidance molecule (RGM) family. In terms of processing, autocatalytically cleaved at low pH; the two chains remain linked via two disulfide bonds.

Its subcellular location is the cell membrane. Functionally, acts as an axon-specific repulsive guidance molecule in the retinotectal system. Repulsive for a subset of axons of the temporal half of the retina. Provides thus positional information for the temporal axons invading the optic tectum in the stratum opticum. This Gallus gallus (Chicken) protein is Repulsive guidance molecule A (RGMA).